Here is a 395-residue protein sequence, read N- to C-terminus: MWLLLITSVISTFGGAHGLFGKLGPGNPEANMNISQMITYWGYPCQEYEVVTEDGYILGVYRIPHGKNNSENIGKRPVVYLQHGLIASATNWIANLPNNSLAFMLADAGYDVWLGNSRGNTWSRKNVYYSPDSVEFWAFSFDEMAKYDLPATINFIVQKTGQEKIHYVGHSQGTTIGFIAFSTNPTLAKKIKTFYALAPVATVKYTQSPLKKISFIPTFLFKLMFGKKMFLPHTYFDDFLGTEVCSREVLDLLCSNTLFIFCGFDKKNLNVSRFDVYLGHNPAGTSVQDFLHWAQLVRSGKFQAFNWGSPSQNMLHYNQKTPPEYDVSAMTVPVAVWNGGNDILADPQDVAMLLPKLSNLLFHKEILAYNHLDFIWAMDAPQEVYNEMISMMAED.

A signal peptide spans 1–18; sequence MWLLLITSVISTFGGAHG. Residues N33, N68, and N98 are each glycosylated (N-linked (GlcNAc...) asparagine). The AB hydrolase-1 domain occupies 77 to 376; that stretch reads PVVYLQHGLI…LAYNHLDFIW (300 aa). The active-site Nucleophile is S171. C245 and C254 are disulfide-bonded. N270 carries N-linked (GlcNAc...) asparagine glycosylation. Catalysis depends on charge relay system residues D342 and H371.

This sequence belongs to the AB hydrolase superfamily. Lipase family. In terms of tissue distribution, secreted by the serous (von Ebner's) glands at the back of the rat tongue.

The protein resides in the secreted. The enzyme catalyses a triacylglycerol + H2O = a diacylglycerol + a fatty acid + H(+). The catalysed reaction is 1,2,3-tri-(9Z-octadecenoyl)-glycerol + H2O = 1,2-di-(9Z-octadecenoyl)-sn-glycerol + (9Z)-octadecenoate + H(+). It carries out the reaction 1,2,3-trioctanoylglycerol + H2O = 1,2-dioctanoyl-sn-glycerol + octanoate + H(+). Its function is as follows. Catalyzes the hydrolysis of triacylglycerols to yield free fatty acids, diacylglycerol, monoacylglycerol, and glycerol. Shows a preferential hydrolysis at the sn-3 position of triacylglycerol. The protein is Gastric triacylglycerol lipase (Lipf) of Rattus norvegicus (Rat).